A 266-amino-acid polypeptide reads, in one-letter code: Undecaprenyl-diphosphatase (266 aa).

The next 8 membrane-spanning stretches (helical) occupy residues 1-21, 39-59, 87-107, 111-131, 144-164, 183-203, 218-238, and 246-266; these read MDTF…FLPI, QGLS…VMYF, WWII…KGFI, LRNI…LWWA, VGWK…IPGT, AAAR…AILV, ALGL…HYFL, and MTPF…FIFL.

This sequence belongs to the UppP family.

It is found in the cell inner membrane. It carries out the reaction di-trans,octa-cis-undecaprenyl diphosphate + H2O = di-trans,octa-cis-undecaprenyl phosphate + phosphate + H(+). In terms of biological role, catalyzes the dephosphorylation of undecaprenyl diphosphate (UPP). Confers resistance to bacitracin. The chain is Undecaprenyl-diphosphatase from Shewanella piezotolerans (strain WP3 / JCM 13877).